A 228-amino-acid polypeptide reads, in one-letter code: MEYIAEGFRAAMELLVSFDPQVYTIIFLSVFVSSTATAIAAAVSIPLGIFAGISNFRLKRLFSKVLYSLMSVPSVIVGLVVAIGLSRRGPLGFMQLLYTPTAMIIAQALLVFPLCLGLTYSLSKNRGSEIERIGKTLGAGKLQVIILIIRELKAELFINVVTTFSRAISEVGAVMIVGGNIKGHTRVITTSIAMLNSMGDYPMAIALGLVLLMISFAINAVIYSLQEE.

5 helical membrane-spanning segments follow: residues 25-45, 65-85, 102-122, 144-164, and 203-223; these read IIFL…AVSI, VLYS…AIGL, AMII…TYSL, VIIL…VTTF, and MAIA…AVIY. The region spanning 26–222 is the ABC transmembrane type-1 domain; the sequence is IFLSVFVSST…MISFAINAVI (197 aa).

It belongs to the binding-protein-dependent transport system permease family. As to quaternary structure, the complex is composed of two ATP-binding proteins (TupC), two transmembrane proteins (TupB) and a solute-binding protein (TupA).

It localises to the cell membrane. Its function is as follows. Part of an ABC transporter complex involved in tungstate uptake. Probably responsible for the translocation of the substrate across the membrane. This is Tungstate uptake system permease protein TupB from Peptoclostridium acidaminophilum (Eubacterium acidaminophilum).